We begin with the raw amino-acid sequence, 519 residues long: Probable U3 small nucleolar RNA-associated protein 18 (519 aa).

WD repeat units follow at residues 26–66 (DKEN…MFDT), 71–111 (GAKD…RLMI), 216–254 (SHSG…NPLV), 259–298 (LRSS…VQKV), 306–345 (NFQP…FATS), 347–386 (KIEG…VVRR), 390–429 (QDGV…ADAA), 438–479 (NITF…VFRN), and 485–519 (TPLG…AHYD).

It belongs to the WD repeat UTP18 family. Component of the ribosomal small subunit (SSU) processome.

The protein resides in the nucleus. Its subcellular location is the nucleolus. Functionally, involved in nucleolar processing of pre-18S ribosomal RNA. This Schizosaccharomyces pombe (strain 972 / ATCC 24843) (Fission yeast) protein is Probable U3 small nucleolar RNA-associated protein 18.